Reading from the N-terminus, the 331-residue chain is UPF0194 membrane protein YbhG (331 aa).

The first 19 residues, 1–19 (MKKPVVIGLAIAAIVTVIA), serve as a signal peptide directing secretion. Residues 107 to 208 (EEIAQAAAAV…LDLQDTTLIA (102 aa)) are a coiled coil.

The protein belongs to the UPF0194 family.

The protein resides in the periplasm. The protein is UPF0194 membrane protein YbhG of Salmonella arizonae (strain ATCC BAA-731 / CDC346-86 / RSK2980).